The primary structure comprises 329 residues: Vanillate O-demethylase oxygenase subunit (329 aa).

Residues 1–84 (MICNERMVIY…AQERHGFIWV (84 aa)) form the Rieske domain. Positions 24, 26, 43, and 46 each coordinate [2Fe-2S] cluster.

The protein belongs to the bacterial ring-hydroxylating dioxygenase alpha subunit family. In terms of assembly, this demethylase system consists of two proteins: an oxygenase and an oxygenase reductase. [2Fe-2S] cluster is required as a cofactor. Fe cation serves as cofactor.

The catalysed reaction is vanillate + NADH + O2 + H(+) = 3,4-dihydroxybenzoate + formaldehyde + NAD(+) + H2O. It functions in the pathway xenobiotic degradation; vanillyl-alcohol degradation. The polypeptide is Vanillate O-demethylase oxygenase subunit (vanA) (Pseudomonas sp. (strain ATCC 19151)).